A 300-amino-acid chain; its full sequence is Flaviolin linalyltransferase (300 aa).

This sequence belongs to the aromatic prenyltransferase family. Monomer.

The catalysed reaction is flaviolin + (2E)-geranyl diphosphate = 3-linalylflaviolin + diphosphate. Does not require magnesium or any other divalent metal ions for activity. In terms of biological role, involved in the biosynthesis of furanonaphthoquinone I (FNQ I). Catalyzes C- and O-prenylations of different phenolic substrates. With flaviolin as substrate, catalyzes the formation of a carbon-carbon-bond between C-3 (rather than C-1) of geranyl diphosphate and C-3 of flaviolin. With 1,3-dihydroxynaphthalene and 4-hydroxybenzoate as substrates, catalyzes O-prenylations. The protein is Flaviolin linalyltransferase of Streptomyces virginiae (Streptomyces cinnamonensis).